The chain runs to 1049 residues: Multidrug efflux pump subunit AcrB (1049 aa).

Residues 1-9 (MPNFFIDRP) are Cytoplasmic-facing. The helical transmembrane segment at 10-28 (IFAWVIAIIIMLAGGLAIL) threads the bilayer. Topologically, residues 29 to 336 (KLPVAQYPTI…YDTTPFVKIS (308 aa)) are periplasmic. A helical membrane pass occupies residues 337–356 (IHEVVKTLVEAIILVFLVMY). Residues 357 to 365 (LFLQNFRAT) lie on the Cytoplasmic side of the membrane. Residues 366–385 (LIPTIAVPVVLLGTFAVLAA) form a helical membrane-spanning segment. At 386-391 (FGFSIN) the chain is on the periplasmic side. The helical transmembrane segment at 392 to 413 (TLTMFGMVLAIGLLVDDAIVVV) threads the bilayer. The Cytoplasmic portion of the chain corresponds to 414-438 (ENVERVMAEEGLPPKEATRKSMGQI). The helical transmembrane segment at 439–457 (QGALVGIAMVLSAVFVPMA) threads the bilayer. Over 458–465 (FFGGSTGA) the chain is Periplasmic. The helical transmembrane segment at 466 to 490 (IYRQFSITIVSAMALSVLVALILTP) threads the bilayer. Topologically, residues 491 to 538 (ALCATMLKPIAKGDHGEGKKGFFGWFNRMFEKSTHHYTDSVGGILRST) are cytoplasmic. Residues 539 to 555 (GRYLVLYLIIVVGMAYL) form a helical membrane-spanning segment. The Periplasmic segment spans residues 556–871 (FVRLPSSFLP…MSYQERLSGN (316 aa)). A helical membrane pass occupies residues 872 to 888 (QAPSLYAISLIVVFLCL). Over 889 to 898 (AALYESWSIP) the chain is Cytoplasmic. A helical transmembrane segment spans residues 899-918 (FSVMLVVPLGVIGALLAATF). The Periplasmic segment spans residues 919–924 (RGLTND). Residues 925-943 (VYFQVGLLTTIGLSAKNAI) form a helical membrane-spanning segment. The Cytoplasmic portion of the chain corresponds to 944–972 (LIVEFAKDLMDKEGKGLIEATLDAVRMRL). The chain crosses the membrane as a helical span at residues 973-992 (RPILMTSLAFILGVMPLVIS). Over 993-998 (TGAGSG) the chain is Periplasmic. Residues 999–1018 (AQNAVGTGVMGGMVTATVLA) form a helical membrane-spanning segment. Residues 1019 to 1049 (IFFVPVFFVVVRRRFSRKNEDIEHSHTVDHH) lie on the Cytoplasmic side of the membrane.

It belongs to the resistance-nodulation-cell division (RND) (TC 2.A.6) family. Homotrimer, with large domains that extend into the periplasm, interacts with AcrA and TolC. AcrA may be required to stably link this protein and TolC. Interacts with AcrZ. Part of the AcrA-AcrB-AcrZ-TolC efflux pump.

Its subcellular location is the cell inner membrane. Its function is as follows. AcrA-AcrB-AcrZ-TolC is a drug efflux protein complex with broad substrate specificity that uses the proton motive force to export substrates. Functionally, (Microbial infection) Involved in contact-dependent growth inhibition (CDI), acts downstream of BamA, the receptor for CDI. Its role in CDI is independent of the AcrA-AcrB-TolC efflux pump complex. The protein is Multidrug efflux pump subunit AcrB (acrB) of Escherichia coli (strain K12).